Reading from the N-terminus, the 285-residue chain is Bifunctional protein FolD (285 aa).

Residues 165–167 (GRS) and Ser190 each bind NADP(+).

The protein belongs to the tetrahydrofolate dehydrogenase/cyclohydrolase family. Homodimer.

It catalyses the reaction (6R)-5,10-methylene-5,6,7,8-tetrahydrofolate + NADP(+) = (6R)-5,10-methenyltetrahydrofolate + NADPH. The catalysed reaction is (6R)-5,10-methenyltetrahydrofolate + H2O = (6R)-10-formyltetrahydrofolate + H(+). Its pathway is one-carbon metabolism; tetrahydrofolate interconversion. Functionally, catalyzes the oxidation of 5,10-methylenetetrahydrofolate to 5,10-methenyltetrahydrofolate and then the hydrolysis of 5,10-methenyltetrahydrofolate to 10-formyltetrahydrofolate. The sequence is that of Bifunctional protein FolD from Burkholderia mallei (strain NCTC 10247).